Here is a 234-residue protein sequence, read N- to C-terminus: BTB/POZ domain-containing protein KCTD5 (234 aa).

Ala2 is modified (N-acetylalanine). The 103-residue stretch at 44-146 (KWVRLNVGGT…LVKDKIRERD (103 aa)) folds into the BTB domain. The segment at 213–234 (PYGTTSEPSEKAKILQERGSRM) is disordered. Residues 220-234 (PSEKAKILQERGSRM) are compositionally biased toward basic and acidic residues.

In terms of assembly, homopentamer. Interacts (via C-terminus) with GRASP55/GORASP2. Interacts with CUL3 and with ubiquitinated proteins. Interacts with CRY1.

It localises to the cytoplasm. Its subcellular location is the cytosol. It is found in the nucleus. In terms of biological role, its interaction with CUL3 suggests that it may act as a substrate adapter in some E3 ligase complex. Does not affect the function of Kv channel Kv2.1/KCNB1, Kv1.2/KCNA2, Kv4.2/KCND2 and Kv3.4/KCNC4. The protein is BTB/POZ domain-containing protein KCTD5 (Kctd5) of Rattus norvegicus (Rat).